Reading from the N-terminus, the 119-residue chain is MEIWINPACSKCRSAVQLLDAEGADYTVRRYLEDVPSEDEIRQVLDRLGLEPWDITRTQEAEAKELGVKEWARDASARDQWIKALAEHPKLIQRPIITADDGTAVVGRTDEAVRDALSR.

An intrachain disulfide couples cysteine 9 to cysteine 12.

This sequence belongs to the ArsC family.

This is an uncharacterized protein from Streptomyces viridochromogenes.